A 483-amino-acid chain; its full sequence is Regulatory protein ViaA (483 aa).

This sequence belongs to the ViaA family. As to quaternary structure, homodimer. Interacts with RavA.

It is found in the cytoplasm. In terms of biological role, component of the RavA-ViaA chaperone complex, which may act on the membrane to optimize the function of some of the respiratory chains. ViaA stimulates the ATPase activity of RavA. The sequence is that of Regulatory protein ViaA from Salmonella dublin (strain CT_02021853).